The chain runs to 475 residues: ATP synthase subunit beta, chloroplastic (475 aa).

An ATP-binding site is contributed by 155–162 (GGAGVGKT).

This sequence belongs to the ATPase alpha/beta chains family. F-type ATPases have 2 components, CF(1) - the catalytic core - and CF(0) - the membrane proton channel. CF(1) has five subunits: alpha(3), beta(3), gamma(1), delta(1), epsilon(1). CF(0) has four main subunits: a(1), b(1), b'(1) and c(9-12).

It localises to the plastid. The protein localises to the chloroplast thylakoid membrane. It carries out the reaction ATP + H2O + 4 H(+)(in) = ADP + phosphate + 5 H(+)(out). Its function is as follows. Produces ATP from ADP in the presence of a proton gradient across the membrane. The catalytic sites are hosted primarily by the beta subunits. The chain is ATP synthase subunit beta, chloroplastic from Ochrosphaera neapolitana.